Reading from the N-terminus, the 500-residue chain is Glutamyl-tRNA(Gln) amidotransferase subunit A (500 aa).

Catalysis depends on charge relay system residues Lys-93 and Ser-168. Residue Ser-192 is the Acyl-ester intermediate of the active site.

Belongs to the amidase family. GatA subfamily. In terms of assembly, heterotrimer of A, B and C subunits.

It catalyses the reaction L-glutamyl-tRNA(Gln) + L-glutamine + ATP + H2O = L-glutaminyl-tRNA(Gln) + L-glutamate + ADP + phosphate + H(+). Allows the formation of correctly charged Gln-tRNA(Gln) through the transamidation of misacylated Glu-tRNA(Gln) in organisms which lack glutaminyl-tRNA synthetase. The reaction takes place in the presence of glutamine and ATP through an activated gamma-phospho-Glu-tRNA(Gln). This is Glutamyl-tRNA(Gln) amidotransferase subunit A from Corynebacterium jeikeium (strain K411).